Reading from the N-terminus, the 364-residue chain is Fructose-bisphosphate aldolase C-A (364 aa).

Substrate is bound by residues R56 and K147. The Proton acceptor role is filled by E188. Catalysis depends on K230, which acts as the Schiff-base intermediate with dihydroxyacetone-P.

Belongs to the class I fructose-bisphosphate aldolase family. As to quaternary structure, homotetramer. In terms of tissue distribution, expressed specifically in Purkinje cells in the brain.

It carries out the reaction beta-D-fructose 1,6-bisphosphate = D-glyceraldehyde 3-phosphate + dihydroxyacetone phosphate. It participates in carbohydrate degradation; glycolysis; D-glyceraldehyde 3-phosphate and glycerone phosphate from D-glucose: step 4/4. The polypeptide is Fructose-bisphosphate aldolase C-A (Danio rerio (Zebrafish)).